Consider the following 360-residue polypeptide: Phospho-N-acetylmuramoyl-pentapeptide-transferase (360 aa).

The next 11 helical transmembrane spans lie at 2 to 22, 26 to 46, 73 to 93, 97 to 117, 134 to 154, 168 to 188, 199 to 219, 236 to 256, 263 to 283, 288 to 308, and 339 to 359; these read LVWV…FQYL, AILG…VMIR, TMGG…WADL, YVLI…VDDW, YFWQ…TAHL, ITLA…VGGS, GLAI…AYLS, TGEL…FLWF, VFMG…VAVI, LVFF…ILQV, and IVRF…TLKI.

It belongs to the glycosyltransferase 4 family. MraY subfamily. Mg(2+) serves as cofactor.

It localises to the cell inner membrane. The enzyme catalyses UDP-N-acetyl-alpha-D-muramoyl-L-alanyl-gamma-D-glutamyl-meso-2,6-diaminopimeloyl-D-alanyl-D-alanine + di-trans,octa-cis-undecaprenyl phosphate = di-trans,octa-cis-undecaprenyl diphospho-N-acetyl-alpha-D-muramoyl-L-alanyl-D-glutamyl-meso-2,6-diaminopimeloyl-D-alanyl-D-alanine + UMP. It participates in cell wall biogenesis; peptidoglycan biosynthesis. In terms of biological role, catalyzes the initial step of the lipid cycle reactions in the biosynthesis of the cell wall peptidoglycan: transfers peptidoglycan precursor phospho-MurNAc-pentapeptide from UDP-MurNAc-pentapeptide onto the lipid carrier undecaprenyl phosphate, yielding undecaprenyl-pyrophosphoryl-MurNAc-pentapeptide, known as lipid I. This Hahella chejuensis (strain KCTC 2396) protein is Phospho-N-acetylmuramoyl-pentapeptide-transferase.